The sequence spans 1411 residues: Protein three rows (1411 aa).

The tract at residues 1065–1071 (VEPIRKQ) is separase cleavage-site. Disordered regions lie at residues 1221-1240 (LEPP…NISP), 1268-1301 (VRPA…KSPK), and 1330-1411 (AKST…RHRN). 2 stretches are compositionally biased toward low complexity: residues 1270–1289 (PASS…NASS) and 1386–1398 (TAEQ…TATP).

In terms of assembly, interacts with pim and Sse. Cleavage of thr contributes to inactivation of Sse.

It localises to the cytoplasm. Required specifically for chromosome disjunction during all mitoses; maternally provided protein is sufficient until mitosis 14 then zygotic protein is required. Involved in formation and/or maintenance of epithelial structures: bud extension during Malpighian tubule development, and foregut and hindgut morphogenesis. The polypeptide is Protein three rows (thr) (Drosophila virilis (Fruit fly)).